Reading from the N-terminus, the 131-residue chain is Small ribosomal subunit protein uS8 (131 aa).

Belongs to the universal ribosomal protein uS8 family. In terms of assembly, part of the 30S ribosomal subunit. Contacts proteins S5 and S12.

One of the primary rRNA binding proteins, it binds directly to 16S rRNA central domain where it helps coordinate assembly of the platform of the 30S subunit. The chain is Small ribosomal subunit protein uS8 from Zymomonas mobilis subsp. mobilis (strain ATCC 31821 / ZM4 / CP4).